A 594-amino-acid chain; its full sequence is Cytoplasmic polyadenylation element-binding protein 2 (594 aa).

The segment covering 72 to 90 has biased composition (basic and acidic residues); it reads KEREKVDEEKEGVERREEN. Disordered regions lie at residues 72 to 91 and 367 to 388; these read KERE…EENG and GGGF…STSE. Residues 367-378 show a composition bias toward gly residues; it reads GGGFNSGSGSGN. The RRM domain occupies 458–540; the sequence is LVAFIGGVPR…KRVEIKPYFF (83 aa).

In terms of biological role, cytoplasmic polyadenylation element binding protein that binds to and regulates the translation of specific mRNAs. The polypeptide is Cytoplasmic polyadenylation element-binding protein 2 (cpb-2) (Caenorhabditis japonica).